A 490-amino-acid chain; its full sequence is AP-5 complex subunit mu-1 (490 aa).

Residues 206 to 476 form the MHD domain; the sequence is KAQISISITE…LISSDYYIWN (271 aa).

The protein belongs to the adaptor complexes medium subunit family. As to quaternary structure, probably part of the adaptor protein complex 5 (AP-5) a tetramer composed of AP5B1, AP5M1, AP5S1 and AP5Z1. In terms of tissue distribution, widely expressed, including in small intestine and testis. In small intestine, highly expressed in cytoplasm of villi epithelial cells and internal glands. In testis, selectively expressed in maturing sperm cells (at protein level).

The protein resides in the cytoplasm. Its subcellular location is the cytosol. It is found in the late endosome membrane. It localises to the lysosome membrane. Its function is as follows. As part of AP-5, a probable fifth adaptor protein complex it may be involved in endosomal transport. This Mus musculus (Mouse) protein is AP-5 complex subunit mu-1 (Ap5m1).